The following is a 261-amino-acid chain: MLVHPQFDPVAIHLGSFGIHWYGLMYLIGFLAFLWLGRWRIAHQPWWGKAGWTKKNLDDALFYGALGVILGGRLGYALFYQHEYYLTHPHEILFLWQGGMSFHGGFLGVMVAMLLFAKRRGLTFFGIMDFVAPLVPVGLGAGRMGNFINGELWGRASDLPWAMVFPHVDSIARHPSQLYEFLLEGVALFILLWWYSSKPRARGSVSALFLIGYGSFRFLVEFTREPDSFLGLLSLGLSMGQWLSLPMVIAGVWLLIVSLRR.

Helical transmembrane passes span 17-37 (FGIH…LWLG), 60-80 (ALFY…ALFY), 92-112 (ILFL…VMVA), and 121-141 (GLTF…GLGA). Position 143 (arginine 143) interacts with a 1,2-diacyl-sn-glycero-3-phospho-(1'-sn-glycerol). The next 3 membrane-spanning stretches (helical) occupy residues 175-195 (PSQL…LWWY), 203-223 (GSVS…VEFT), and 237-257 (LSMG…LLIV).

Belongs to the Lgt family.

The protein localises to the cell inner membrane. The catalysed reaction is L-cysteinyl-[prolipoprotein] + a 1,2-diacyl-sn-glycero-3-phospho-(1'-sn-glycerol) = an S-1,2-diacyl-sn-glyceryl-L-cysteinyl-[prolipoprotein] + sn-glycerol 1-phosphate + H(+). Its pathway is protein modification; lipoprotein biosynthesis (diacylglyceryl transfer). Catalyzes the transfer of the diacylglyceryl group from phosphatidylglycerol to the sulfhydryl group of the N-terminal cysteine of a prolipoprotein, the first step in the formation of mature lipoproteins. This Methylobacillus flagellatus (strain ATCC 51484 / DSM 6875 / VKM B-1610 / KT) protein is Phosphatidylglycerol--prolipoprotein diacylglyceryl transferase.